Here is a 445-residue protein sequence, read N- to C-terminus: DNA polymerase IV (445 aa).

Residues 49–229 (LAHVDCDAFY…KPVGMIWGVG (181 aa)) form the UmuC domain. Positions 53 and 146 each coordinate Mg(2+). The active site involves E147.

This sequence belongs to the DNA polymerase type-Y family. Monomer. Mg(2+) serves as cofactor.

Its subcellular location is the cytoplasm. It catalyses the reaction DNA(n) + a 2'-deoxyribonucleoside 5'-triphosphate = DNA(n+1) + diphosphate. Poorly processive, error-prone DNA polymerase involved in untargeted mutagenesis. Copies undamaged DNA at stalled replication forks, which arise in vivo from mismatched or misaligned primer ends. These misaligned primers can be extended by PolIV. Exhibits no 3'-5' exonuclease (proofreading) activity. May be involved in translesional synthesis, in conjunction with the beta clamp from PolIII. This is DNA polymerase IV from Brucella melitensis biotype 1 (strain ATCC 23456 / CCUG 17765 / NCTC 10094 / 16M).